A 318-amino-acid chain; its full sequence is NADH-ubiquinone oxidoreductase chain 1 (318 aa).

A run of 9 helical transmembrane segments spans residues 2–22 (FLTNISCLIIPILLAVAFLTL), 36–56 (GPNIVGPYGLLQPIADAIKLF), 69–89 (LLFTIAPTLALSLALTLWIPL), 100–120 (LGMLFILAMSSLAVYSILWSG), 130–152 (IGALRAVAQTISYEVTLAIILLH), 171–191 (HIWLIIPSWPLTMMWFISTLA), 217–237 (AGPFALFFLAEYANIMMMNAL), 254–273 (LYSTNFMLKTTMLTISFLWI), and 294–314 (LPLTLALCMWHTSLLISLTSI).

The protein belongs to the complex I subunit 1 family.

The protein resides in the mitochondrion inner membrane. The catalysed reaction is a ubiquinone + NADH + 5 H(+)(in) = a ubiquinol + NAD(+) + 4 H(+)(out). Its function is as follows. Core subunit of the mitochondrial membrane respiratory chain NADH dehydrogenase (Complex I) that is believed to belong to the minimal assembly required for catalysis. Complex I functions in the transfer of electrons from NADH to the respiratory chain. The immediate electron acceptor for the enzyme is believed to be ubiquinone. The chain is NADH-ubiquinone oxidoreductase chain 1 (MT-ND1) from Cyclopes didactylus (Silky anteater).